The sequence spans 567 residues: Glucose-6-phosphate isomerase, cytosolic B (567 aa).

D-glucose 6-phosphate-binding positions include glycine 156–serine 157, serine 212–threonine 217, glutamine 356, glutamate 360, histidine 391, and lysine 516. The active-site Proton donor is the glutamate 360. Catalysis depends on residues histidine 391 and lysine 516.

It belongs to the GPI family. As to quaternary structure, homodimer.

It localises to the cytoplasm. The enzyme catalyses alpha-D-glucose 6-phosphate = beta-D-fructose 6-phosphate. It participates in carbohydrate degradation; glycolysis; D-glyceraldehyde 3-phosphate and glycerone phosphate from D-glucose: step 2/4. In terms of biological role, catalyzes the conversion of glucose-6-phosphate to fructose-6-phosphate, the second step in glycolysis, and the reverse reaction during gluconeogenesis. The sequence is that of Glucose-6-phosphate isomerase, cytosolic B from Oryza sativa subsp. japonica (Rice).